The sequence spans 484 residues: Ferrochelatase-2, chloroplastic (484 aa).

This sequence belongs to the ferrochelatase family.

Its subcellular location is the plastid. It is found in the chloroplast. The catalysed reaction is heme b + 2 H(+) = protoporphyrin IX + Fe(2+). It functions in the pathway porphyrin-containing compound metabolism; protoheme biosynthesis; protoheme from protoporphyrin-IX: step 1/1. Its function is as follows. Catalyzes the ferrous insertion into protoporphyrin IX. The chain is Ferrochelatase-2, chloroplastic (HEMH) from Hordeum vulgare (Barley).